The sequence spans 128 residues: NADPH-dependent 7-cyano-7-deazaguanine reductase (128 aa).

Catalysis depends on Cys-34, which acts as the Thioimide intermediate. Catalysis depends on Asp-41, which acts as the Proton donor. Substrate contacts are provided by residues 56–58 (VEL) and 75–76 (HE).

It belongs to the GTP cyclohydrolase I family. QueF type 1 subfamily.

Its subcellular location is the cytoplasm. It catalyses the reaction 7-aminomethyl-7-carbaguanine + 2 NADP(+) = 7-cyano-7-deazaguanine + 2 NADPH + 3 H(+). It functions in the pathway tRNA modification; tRNA-queuosine biosynthesis. Functionally, catalyzes the NADPH-dependent reduction of 7-cyano-7-deazaguanine (preQ0) to 7-aminomethyl-7-deazaguanine (preQ1). The polypeptide is NADPH-dependent 7-cyano-7-deazaguanine reductase (Thermomicrobium roseum (strain ATCC 27502 / DSM 5159 / P-2)).